The sequence spans 792 residues: Phenylalanine--tRNA ligase beta subunit (792 aa).

A tRNA-binding domain is found at 38 to 148 (NTKLAGFIVA…DDYKVGNKFF (111 aa)). One can recognise a B5 domain in the interval 406 to 482 (EADTKVSFDY…RIYGYDKIKE (77 aa)). Positions 460, 466, 469, and 470 each coordinate Mg(2+). Positions 698-790 (YKHQSVKRDF…VHKNTGGILR (93 aa)) constitute an FDX-ACB domain.

The protein belongs to the phenylalanyl-tRNA synthetase beta subunit family. Type 1 subfamily. Tetramer of two alpha and two beta subunits. Mg(2+) is required as a cofactor.

It is found in the cytoplasm. It catalyses the reaction tRNA(Phe) + L-phenylalanine + ATP = L-phenylalanyl-tRNA(Phe) + AMP + diphosphate + H(+). The polypeptide is Phenylalanine--tRNA ligase beta subunit (Wolbachia sp. subsp. Brugia malayi (strain TRS)).